The primary structure comprises 151 residues: S-protein homolog 1 (151 aa).

The first 18 residues, 1–18, serve as a signal peptide directing secretion; that stretch reads MNCIKQFLLAICFSLALT.

This sequence belongs to the plant self-incompatibility (S1) protein family. In terms of tissue distribution, restricted to floral tissues.

It is found in the secreted. This Arabidopsis thaliana (Mouse-ear cress) protein is S-protein homolog 1.